The sequence spans 81 residues: Photosystem I iron-sulfur center (81 aa).

2 4Fe-4S ferredoxin-type domains span residues 2–31 (SHSV…MIPW) and 39–68 (IASA…VRVY). Positions 11, 14, 17, 21, 48, 51, 54, and 58 each coordinate [4Fe-4S] cluster.

As to quaternary structure, the eukaryotic PSI reaction center is composed of at least 11 subunits. [4Fe-4S] cluster is required as a cofactor.

Its subcellular location is the plastid. It is found in the chloroplast thylakoid membrane. The enzyme catalyses reduced [plastocyanin] + hnu + oxidized [2Fe-2S]-[ferredoxin] = oxidized [plastocyanin] + reduced [2Fe-2S]-[ferredoxin]. Its function is as follows. Apoprotein for the two 4Fe-4S centers FA and FB of photosystem I (PSI); essential for photochemical activity. FB is the terminal electron acceptor of PSI, donating electrons to ferredoxin. The C-terminus interacts with PsaA/B/D and helps assemble the protein into the PSI complex. Required for binding of PsaD and PsaE to PSI. PSI is a plastocyanin-ferredoxin oxidoreductase, converting photonic excitation into a charge separation, which transfers an electron from the donor P700 chlorophyll pair to the spectroscopically characterized acceptors A0, A1, FX, FA and FB in turn. The polypeptide is Photosystem I iron-sulfur center (Phaseolus vulgaris (Kidney bean)).